The following is a 264-amino-acid chain: Thymidylate synthase (264 aa).

Residue Arg-21 coordinates dUMP. His-51 is a (6R)-5,10-methylene-5,6,7,8-tetrahydrofolate binding site. Residue 126-127 (RR) coordinates dUMP. Residue Cys-146 is the Nucleophile of the active site. Residues 166-169 (RSCD), Asn-177, and 207-209 (HLY) each bind dUMP. Position 169 (Asp-169) interacts with (6R)-5,10-methylene-5,6,7,8-tetrahydrofolate. Ala-263 is a binding site for (6R)-5,10-methylene-5,6,7,8-tetrahydrofolate.

This sequence belongs to the thymidylate synthase family. Bacterial-type ThyA subfamily. In terms of assembly, homodimer.

The protein localises to the cytoplasm. It carries out the reaction dUMP + (6R)-5,10-methylene-5,6,7,8-tetrahydrofolate = 7,8-dihydrofolate + dTMP. The protein operates within pyrimidine metabolism; dTTP biosynthesis. In terms of biological role, catalyzes the reductive methylation of 2'-deoxyuridine-5'-monophosphate (dUMP) to 2'-deoxythymidine-5'-monophosphate (dTMP) while utilizing 5,10-methylenetetrahydrofolate (mTHF) as the methyl donor and reductant in the reaction, yielding dihydrofolate (DHF) as a by-product. This enzymatic reaction provides an intracellular de novo source of dTMP, an essential precursor for DNA biosynthesis. This is Thymidylate synthase from Shewanella baltica (strain OS185).